A 244-amino-acid chain; its full sequence is 14-3-3 protein homolog 1 (244 aa).

It belongs to the 14-3-3 family.

This Echinococcus multilocularis (Fox tapeworm) protein is 14-3-3 protein homolog 1.